Consider the following 227-residue polypeptide: Transmembrane emp24 domain-containing protein 1 (227 aa).

A signal peptide spans 1–23 (MMAAGAALALALWLLMPPVEVGG). At 24-194 (AGPPPIQDGE…LQEGNLERVN (171 aa)) the chain is on the extracellular side. The GOLD domain occupies 43 to 125 (KQCFYQSAPA…EKLVFFELIF (83 aa)). The stretch at 145 to 170 (EMLDVKMEDIKESIETMRTRLERSIQ) forms a coiled coil. The chain crosses the membrane as a helical span at residues 195 to 215 (FWSAVNVAVLLLVAVLQVCTL). At 216-227 (KRFFQDKRPVPT) the chain is on the cytoplasmic side. The short motif at 218–219 (FF) is the COPII vesicle coat-binding element. The COPI vesicle coat-binding signature appears at 218–227 (FFQDKRPVPT).

It belongs to the EMP24/GP25L family. Homodimer in endoplasmic reticulum, endoplasmic reticulum-Golgi intermediate compartment and cis-Golgi network. Interacts with IL1RL1. Interacts with RNF26; this interaction is important to modulate innate immune signaling through the cGAS-STING pathway. In terms of tissue distribution, widely expressed.

It localises to the cell membrane. The protein resides in the endoplasmic reticulum membrane. It is found in the golgi apparatus. Its subcellular location is the cis-Golgi network membrane. The protein localises to the endoplasmic reticulum-Golgi intermediate compartment membrane. Its function is as follows. Potential role in vesicular protein trafficking, mainly in the early secretory pathway. May act as a cargo receptor at the lumenal side for incorporation of secretory cargo molecules into transport vesicles and may be involved in vesicle coat formation at the cytoplasmic side. Plays a positive role in IL-33-mediated IL-8 and IL-6 production by interacting with interleukin-33 receptor IL1RL1. Also plays a role in the modulation of innate immune signaling through the cGAS-STING pathway by interacting with RNF26. The chain is Transmembrane emp24 domain-containing protein 1 (TMED1) from Homo sapiens (Human).